Reading from the N-terminus, the 170-residue chain is Probable deoxyuridine 5'-triphosphate nucleotidohydrolase (170 aa).

This sequence belongs to the dCTP deaminase family. Archaeal dUTPase subfamily.

The catalysed reaction is dUTP + H2O = dUMP + diphosphate + H(+). It participates in pyrimidine metabolism; dUMP biosynthesis; dUMP from dCTP (dUTP route): step 2/2. Its function is as follows. This enzyme is involved in nucleotide metabolism: it produces dUMP, the immediate precursor of thymidine nucleotides and it decreases the intracellular concentration of dUTP so that uracil cannot be incorporated into DNA. This chain is Probable deoxyuridine 5'-triphosphate nucleotidohydrolase, found in Methanococcoides burtonii (strain DSM 6242 / NBRC 107633 / OCM 468 / ACE-M).